The primary structure comprises 691 residues: Beta-galactosidase III (691 aa).

2 residues coordinate substrate: R121 and N159. Residue E160 is the Proton donor of the active site. Residue E318 is the Nucleophile of the active site. Residues W326 and 366 to 369 (EKWH) each bind substrate.

This sequence belongs to the glycosyl hydrolase 42 family.

The enzyme catalyses Hydrolysis of terminal non-reducing beta-D-galactose residues in beta-D-galactosides.. Specific for beta-D-anomer-linked galactoside substrates. Hydrolyzes o-nitrophenyl-beta-D-galactopyranoside (ONPG), chromogen 5-bromo-4-chloro-3-indolyl-beta-D-galactopyranoside (X-gal) and to a lesser extent lactose. Hydrolyzes p-nitrophenyl-beta-D-galacturonide very slightly. Does not hydrolyze maltose, sucrose, raffinose or melibiose. Has some transgalactosylation activity yielding galacto-oligosaccharides (GaOS), including O-beta-D-galactopyranosyl-(1,3)-O-beta-D-galactopyranosyl-(1-4)-D-glucopyranose. The protein is Beta-galactosidase III of Bifidobacterium longum subsp. infantis.